The chain runs to 349 residues: Methylthioribose-1-phosphate isomerase (349 aa).

Residues 49-51, R93, and Q201 each bind substrate; that span reads RGA. The active-site Proton donor is the D242. 252–253 is a binding site for substrate; it reads NK.

Belongs to the EIF-2B alpha/beta/delta subunits family. MtnA subfamily.

It carries out the reaction 5-(methylsulfanyl)-alpha-D-ribose 1-phosphate = 5-(methylsulfanyl)-D-ribulose 1-phosphate. It functions in the pathway amino-acid biosynthesis; L-methionine biosynthesis via salvage pathway; L-methionine from S-methyl-5-thio-alpha-D-ribose 1-phosphate: step 1/6. Catalyzes the interconversion of methylthioribose-1-phosphate (MTR-1-P) into methylthioribulose-1-phosphate (MTRu-1-P). The protein is Methylthioribose-1-phosphate isomerase of Petrotoga mobilis (strain DSM 10674 / SJ95).